Here is a 157-residue protein sequence, read N- to C-terminus: S-ribosylhomocysteine lyase (157 aa).

Fe cation contacts are provided by H54, H58, and C124.

It belongs to the LuxS family. As to quaternary structure, homodimer. Fe cation is required as a cofactor.

It carries out the reaction S-(5-deoxy-D-ribos-5-yl)-L-homocysteine = (S)-4,5-dihydroxypentane-2,3-dione + L-homocysteine. Involved in the synthesis of autoinducer 2 (AI-2) which is secreted by bacteria and is used to communicate both the cell density and the metabolic potential of the environment. The regulation of gene expression in response to changes in cell density is called quorum sensing. Catalyzes the transformation of S-ribosylhomocysteine (RHC) to homocysteine (HC) and 4,5-dihydroxy-2,3-pentadione (DPD). The protein is S-ribosylhomocysteine lyase of Lactobacillus helveticus (strain DPC 4571).